The sequence spans 65 residues: UPF0434 protein CPS_2127 (65 aa).

Belongs to the UPF0434 family.

The protein is UPF0434 protein CPS_2127 of Colwellia psychrerythraea (strain 34H / ATCC BAA-681) (Vibrio psychroerythus).